The following is a 36-amino-acid chain: Toxin Bcg III 29.21 (36 aa).

Residues Cys6 and Cys31 are joined by a disulfide bond.

The protein localises to the secreted. Its subcellular location is the nematocyst. This Bunodosoma cangicum (Sea anemone) protein is Toxin Bcg III 29.21.